A 307-amino-acid chain; its full sequence is Aspartate carbamoyltransferase catalytic subunit (307 aa).

The carbamoyl phosphate site is built by Arg-54 and Thr-55. Lys-83 is a binding site for L-aspartate. Carbamoyl phosphate contacts are provided by Arg-104, His-132, and Gln-135. Residues Arg-165 and Arg-228 each coordinate L-aspartate. Residues Leu-267 and Pro-268 each contribute to the carbamoyl phosphate site.

Belongs to the aspartate/ornithine carbamoyltransferase superfamily. ATCase family. In terms of assembly, heterododecamer (2C3:3R2) of six catalytic PyrB chains organized as two trimers (C3), and six regulatory PyrI chains organized as three dimers (R2).

The enzyme catalyses carbamoyl phosphate + L-aspartate = N-carbamoyl-L-aspartate + phosphate + H(+). Its pathway is pyrimidine metabolism; UMP biosynthesis via de novo pathway; (S)-dihydroorotate from bicarbonate: step 2/3. In terms of biological role, catalyzes the condensation of carbamoyl phosphate and aspartate to form carbamoyl aspartate and inorganic phosphate, the committed step in the de novo pyrimidine nucleotide biosynthesis pathway. The protein is Aspartate carbamoyltransferase catalytic subunit of Clostridium botulinum (strain Langeland / NCTC 10281 / Type F).